A 154-amino-acid chain; its full sequence is Large ribosomal subunit protein uL13 (154 aa).

It belongs to the universal ribosomal protein uL13 family. In terms of assembly, part of the 50S ribosomal subunit.

Its function is as follows. This protein is one of the early assembly proteins of the 50S ribosomal subunit, although it is not seen to bind rRNA by itself. It is important during the early stages of 50S assembly. The chain is Large ribosomal subunit protein uL13 from Mesorhizobium japonicum (strain LMG 29417 / CECT 9101 / MAFF 303099) (Mesorhizobium loti (strain MAFF 303099)).